Consider the following 498-residue polypeptide: Cytochrome P450 monooxygenase astB (498 aa).

A helical membrane pass occupies residues 7–27; that stretch reads FTTMPVVLLVGLVLYQLLAFT. 3 N-linked (GlcNAc...) asparagine glycosylation sites follow: Asn237, Asn248, and Asn346. Residue Cys425 participates in heme binding.

This sequence belongs to the cytochrome P450 family. The cofactor is heme.

It localises to the membrane. It carries out the reaction preasperterpenoid A + 4 reduced [NADPH--hemoprotein reductase] + 4 O2 = asperterpenoid A + 4 oxidized [NADPH--hemoprotein reductase] + 5 H2O + 5 H(+). The enzyme catalyses asperterpenoid A + 2 reduced [NADPH--hemoprotein reductase] + 2 O2 = asperterpenoid B + 2 oxidized [NADPH--hemoprotein reductase] + 3 H2O + 3 H(+). Its pathway is secondary metabolite biosynthesis; terpenoid biosynthesis. Its function is as follows. Cytochrome P450 monooxygenase; part of the gene cluster that mediates the biosynthesis of the asperterpenoids, sesterterpenes that exhibit anti-tuberculosis activity. The first step of the pathway is performed by the sesterterpene synthase astC that possesses both prenyl transferase and terpene cyclase activity, converting isopentenyl diphosphate and dimethylallyl diphosphate into geranylfarnesyl diphosphate (GFPP) and further converting GFPP into preasperterpenoid A, respectively. The cytochrome P450 monooxygenase astB then dually oxidizes preasperterpenoid A to produce asperterpenoid A along with a minor product, asperterpenoid B. Finally, the cytochrome P450 monooxygenase astA converts asperterpenoid A into asperterpenoid C. In Talaromyces wortmannii (Penicillium wortmannii), this protein is Cytochrome P450 monooxygenase astB.